Consider the following 1494-residue polypeptide: Serine/threonine-protein kinase VPS15 (1494 aa).

Glycine 2 is lipidated: N-myristoyl glycine. The region spanning 27 to 307 (LVLKEVLGRG…VFPNYFSPFL (281 aa)) is the Protein kinase domain. ATP-binding positions include 33–41 (LGRGRFLKS) and lysine 54. The active-site Proton acceptor is the aspartate 149. HEAT repeat units lie at residues 383–421 (NSKDEIFYSISDALKKNRHPFLKKITMDDLGTLMSLYDS), 480–517 (DRLQRVLPYVVALLSDPTAIVRCAAMETLCDILPLVRD), 524–562 (KIFPEYIFPMLSMLPEDTEESVRICYASNIAKLALTAYG), 610–646 (KTIAEVVQELVMGPKQTPNVRRALLQDIGELCFFFGQ), 648–685 (QSNDFLLPILPAFLNDRDEQLRSVFFEKIVYVCFFVGQ), 687–724 (SVEEYLLPYIDQALSDQTEAVIVNALECLSTLCKSSFL), and 727–764 (RALLQMIECVYPLLCYPSQWVRRAVVTFIAASSECLGA). Disordered stretches follow at residues 859 to 903 (QSVE…TVEL) and 1037 to 1064 (SASVTSEDASSPADLVGEPSLSRTSVPD). Over residues 1037–1047 (SASVTSEDASS) the composition is skewed to low complexity. 7 WD repeats span residues 1079–1118 (EHRSAVNDIATSSDHSFFVSASDDSTVKVWDSRKLEKDIS), 1127–1166 (LEGSRGMCTTMLRNSTQVVVGASDGVIHMFSIDHISRGLG), 1184–1226 (KEGA…DAWT), 1231–1270 (PEEGYVSSLVTSPCGNWFVSGSSRGVLTLWDLRFRVPVNS), 1276–1323 (ICPI…CHQV), 1371–1409 (PRLPGIRSLLPLPGGDLLTGGTDLKIRRWDYSSPERSYC), and 1466–1494 (DSVQSLASVKLNQRLLISSSRDGAIKVWK).

Belongs to the protein kinase superfamily. Ser/Thr protein kinase family. Interacts with VPS34. Component of a complex made of VPS38/USL1 and PI3K main subunits such as VPS15, ATG6/VPS30 and VPS34. In terms of processing, autophosphorylated. Mainly expressed in anthers, pollen grains and pollen tubes, and, to a lower extent, in other tissues and organs including seedlings, roots, stems, leaves, flowers, pitils and siliques.

It localises to the cytoplasm. The protein localises to the golgi apparatus. The protein resides in the trans-Golgi network membrane. It is found in the endosome membrane. The catalysed reaction is L-seryl-[protein] + ATP = O-phospho-L-seryl-[protein] + ADP + H(+). The enzyme catalyses L-threonyl-[protein] + ATP = O-phospho-L-threonyl-[protein] + ADP + H(+). Functionally, serine/threonine-protein kinase required for cytoplasm to vacuole transport (Cvt) and autophagy as a part of the autophagy-specific VPS34 PI3-kinase complex I. Required for pollen development and germination, probably via the modulation of phosphatidylinositol 3-phosphate (PI3P) formation and vacuolar organization. The polypeptide is Serine/threonine-protein kinase VPS15 (Arabidopsis thaliana (Mouse-ear cress)).